The sequence spans 356 residues: Glutamine synthetase cytosolic isozyme 1-1 (356 aa).

Residue Ser2 is modified to N-acetylserine. A phosphoserine mark is found at Ser2 and Ser48. A GS beta-grasp domain is found at 19 to 99 (IIAEYIWVGG…VMCDAYTPAG (81 aa)). The tract at residues 36 to 62 (KARTLPGPVTDPSQLPKWNYDGSSTGQ) is disordered. In terms of domain architecture, GS catalytic spans 106-356 (KRHAAAKVFS…IAETTILWNP (251 aa)).

It belongs to the glutamine synthetase family. In terms of assembly, homooctamer. Interacts with CRK3 and GRF3. Phosphorylated by CRK3. As to expression, expressed in root tips, root hairs and epidermis. Ubiquitously expressed with higher levels in siliques and roots.

The protein localises to the cytoplasm. The catalysed reaction is L-glutamate + NH4(+) + ATP = L-glutamine + ADP + phosphate + H(+). Its function is as follows. High-affinity glutamine synthetase which catalyzes the synthesis of glutamine from ammonium and glutamate. May contribute to the homeostatic control of glutamine synthesis in roots. The chain is Glutamine synthetase cytosolic isozyme 1-1 (GLN1-1) from Arabidopsis thaliana (Mouse-ear cress).